Reading from the N-terminus, the 129-residue chain is Putative reactive intermediate deaminase TdcF (129 aa).

K58 carries the post-translational modification N6-(pyridoxal phosphate)lysine. Residues 105–107 and E120 each bind substrate; that span reads RSC.

It belongs to the RutC family. Homotrimer.

It participates in amino-acid degradation; L-threonine degradation via propanoate pathway. Functionally, may be a post-translational regulator that controls the metabolic fate of L-threonine or the potentially toxic intermediate 2-ketobutyrate. This is Putative reactive intermediate deaminase TdcF (tdcF) from Escherichia coli O6:H1 (strain CFT073 / ATCC 700928 / UPEC).